A 237-amino-acid polypeptide reads, in one-letter code: Platelet-aggregating proteinase PA-BJ (237 aa).

Positions 1–5 (NSLVI) are excised as a propeptide. Positions 6–229 (VVGGRPCKIN…YLPWIESIIA (224 aa)) constitute a Peptidase S1 domain. 6 disulfide bridges follow: cysteine 12-cysteine 144, cysteine 31-cysteine 47, cysteine 79-cysteine 236, cysteine 123-cysteine 191, cysteine 155-cysteine 170, and cysteine 181-cysteine 205. An N-linked (GlcNAc...) asparagine glycan is attached at asparagine 25. O-linked (GalNAc...) serine glycosylation occurs at serine 28. Residues histidine 46 and aspartate 91 each act as charge relay system in the active site. Catalysis depends on serine 185, which acts as the Charge relay system.

The protein belongs to the peptidase S1 family. Snake venom subfamily. As to quaternary structure, monomer. In terms of tissue distribution, expressed by the venom gland.

It is found in the secreted. Inhibited by PMSF. The amidolytic activity is also inhibited by benzamidine derivatives. In terms of biological role, snake venom serine protease that induces platelet aggregation through activation of protease-activated platelet receptors (PAR1/F2R and PAR4/F2RL3). On F2R, the cleavage occurs at Arg41-Ser42 (like thrombin cleavage), and Arg46-Asn47. In normal condition of hemostasis, the cleavage of the Arg41-Ser42 bond liberates a new N-terminus that functions as an agonist. However after envenomation, the cleavage of Arg46-Asn47 bond degrades this potential agonist. This may explain why the snake protease is less potent than thrombin in causing platelet aggregation and release reaction. On F2RL3, a thrombin-like activity has also been proven by calcium release from lung fibroblasts transfected with this receptor. Possesses amidolytic activities. This Bothrops jararaca (Jararaca) protein is Platelet-aggregating proteinase PA-BJ.